The primary structure comprises 525 residues: GMP synthase [glutamine-hydrolyzing] (525 aa).

The 199-residue stretch at 9–207 (RILILDFGSQ…VLQICQCEPL (199 aa)) folds into the Glutamine amidotransferase type-1 domain. C86 functions as the Nucleophile in the catalytic mechanism. Catalysis depends on residues H181 and E183. The GMPS ATP-PPase domain maps to 208 to 400 (WTPRNIIDQT…LGLPNAMLHR (193 aa)). An ATP-binding site is contributed by 235 to 241 (SGGVDSA).

As to quaternary structure, homodimer.

The catalysed reaction is XMP + L-glutamine + ATP + H2O = GMP + L-glutamate + AMP + diphosphate + 2 H(+). It functions in the pathway purine metabolism; GMP biosynthesis; GMP from XMP (L-Gln route): step 1/1. Its function is as follows. Catalyzes the synthesis of GMP from XMP. In Hamiltonella defensa subsp. Acyrthosiphon pisum (strain 5AT), this protein is GMP synthase [glutamine-hydrolyzing].